The chain runs to 292 residues: Zinc finger protein SNAI3 (292 aa).

An SNAG domain region spans residues 1 to 20 (MPRSFLVKTHSSHRVPNYRR). 4 consecutive C2H2-type zinc fingers follow at residues 152–174 (FECF…RQLH), 183–205 (FTCK…IRTH), 209–231 (CTCK…VRTH), and 237–259 (YACS…LQTH). Residues 265–287 (YRCRRCTKTFSRMSLLARHEESG) form a C2H2-type 5; degenerate zinc finger.

This sequence belongs to the snail C2H2-type zinc-finger protein family.

The protein resides in the nucleus. In terms of biological role, seems to inhibit myoblast differentiation. Transcriptional repressor of E-box-dependent transactivation of downstream myogenic bHLHs genes. Binds preferentially to the canonical E-box sequences 5'-CAGGTG-3' and 5'-CACCTG-3'. The polypeptide is Zinc finger protein SNAI3 (SNAI3) (Homo sapiens (Human)).